The sequence spans 202 residues: Orotate phosphoribosyltransferase (202 aa).

Residues lysine 93 and 113-121 (EDIITTGGS) each bind 5-phospho-alpha-D-ribose 1-diphosphate. The orotate site is built by threonine 117 and arginine 145.

It belongs to the purine/pyrimidine phosphoribosyltransferase family. PyrE subfamily. Homodimer. The cofactor is Mg(2+).

The enzyme catalyses orotidine 5'-phosphate + diphosphate = orotate + 5-phospho-alpha-D-ribose 1-diphosphate. Its pathway is pyrimidine metabolism; UMP biosynthesis via de novo pathway; UMP from orotate: step 1/2. Catalyzes the transfer of a ribosyl phosphate group from 5-phosphoribose 1-diphosphate to orotate, leading to the formation of orotidine monophosphate (OMP). This chain is Orotate phosphoribosyltransferase, found in Campylobacter curvus (strain 525.92).